We begin with the raw amino-acid sequence, 192 residues long: Lipid A acyltransferase PagP (192 aa).

The signal sequence occupies residues 1–26 (MTVVNKSFLTFLVFFCQILFPLNASA). Catalysis depends on residues His-64, Asp-107, and Ser-108.

The protein belongs to the lipid A palmitoyltransferase family. In terms of assembly, homodimer.

The protein resides in the cell outer membrane. The enzyme catalyses a lipid A + a 1,2-diacyl-sn-glycero-3-phosphocholine = a hepta-acyl lipid A + a 2-acyl-sn-glycero-3-phosphocholine. The catalysed reaction is a lipid IVA + a 1,2-diacyl-sn-glycero-3-phosphocholine = a lipid IVB + a 2-acyl-sn-glycero-3-phosphocholine. It carries out the reaction a lipid IIA + a 1,2-diacyl-sn-glycero-3-phosphocholine = a lipid IIB + a 2-acyl-sn-glycero-3-phosphocholine. Transfers a fatty acid residue from the sn-1 position of a phospholipid to the N-linked hydroxyfatty acid chain on the proximal unit of lipid A or its precursors. This chain is Lipid A acyltransferase PagP, found in Cronobacter turicensis (strain DSM 18703 / CCUG 55852 / LMG 23827 / z3032).